Reading from the N-terminus, the 111-residue chain is Large ribosomal subunit protein uL22 (111 aa).

Belongs to the universal ribosomal protein uL22 family. As to quaternary structure, part of the 50S ribosomal subunit.

Functionally, this protein binds specifically to 23S rRNA; its binding is stimulated by other ribosomal proteins, e.g. L4, L17, and L20. It is important during the early stages of 50S assembly. It makes multiple contacts with different domains of the 23S rRNA in the assembled 50S subunit and ribosome. The globular domain of the protein is located near the polypeptide exit tunnel on the outside of the subunit, while an extended beta-hairpin is found that lines the wall of the exit tunnel in the center of the 70S ribosome. The protein is Large ribosomal subunit protein uL22 of Acidithiobacillus ferrooxidans (strain ATCC 23270 / DSM 14882 / CIP 104768 / NCIMB 8455) (Ferrobacillus ferrooxidans (strain ATCC 23270)).